The chain runs to 280 residues: Protein HEAT-INDUCED TAS1 TARGET 4 (280 aa).

Belongs to the heat induced plant HTT protein family. Expressed in seedlings, leaves, stems, inflorescences and siliques.

It localises to the cytoplasm. The protein localises to the nucleus. Functionally, mediates both basal and acquired thermotolerance. The protein is Protein HEAT-INDUCED TAS1 TARGET 4 of Arabidopsis thaliana (Mouse-ear cress).